The chain runs to 104 residues: uncharacterized protein (104 aa).

The chain crosses the membrane as a helical span at residues 81-97 (CLLMLPCISVVMSISSV).

It localises to the cell membrane. This is an uncharacterized protein from Bacillus subtilis (strain 168).